The chain runs to 340 residues: Proline-rich transmembrane protein 2 (340 aa).

Residues 1 to 261 (MAASSSEISE…AGPGVEGGEG (261 aa)) form a disordered region. The Cytoplasmic segment spans residues 1–268 (MAASSSEISE…GEGTQKPRDY (268 aa)). S28 carries the post-translational modification Phosphoserine. T74 carries the phosphothreonine modification. Pro residues-rich tracts occupy residues 131 to 155 (PPEPAPEPAPQPDPQPDSQPTPKPA) and 197 to 207 (APEPHSPPSKK). At S238 the chain carries Phosphoserine. R240 is modified (omega-N-methylarginine). S248 and S249 each carry phosphoserine. The segment at residues 269–289 (IILAILSCFCPMWPVNIVAFA) is an intramembrane region (helical). The Cytoplasmic portion of the chain corresponds to 290–317 (YAVMSRNSLQQGDVDGAQRLGRVAKLLS). Residues 318-338 (IVALVGGVLIIIASCVINLGV) form a helical membrane-spanning segment. Residues 339–340 (YK) are Extracellular-facing.

It belongs to the CD225/Dispanin family. In terms of assembly, component of the outer core of AMPAR complex. AMPAR complex consists of an inner core made of 4 pore-forming GluA/GRIA proteins (GRIA1, GRIA2, GRIA3 and GRIA4) and 4 major auxiliary subunits arranged in a twofold symmetry. One of the two pairs of distinct binding sites is occupied either by CNIH2, CNIH3 or CACNG2, CACNG3. The other harbors CACNG2, CACNG3, CACNG4, CACNG8 or GSG1L. This inner core of AMPAR complex is complemented by outer core constituents binding directly to the GluA/GRIA proteins at sites distinct from the interaction sites of the inner core constituents. Outer core constituents include at least PRRT1, PRRT2, CKAMP44/SHISA9, FRRS1L and NRN1. The proteins of the inner and outer core serve as a platform for other, more peripherally associated AMPAR constituents. Alone or in combination, these auxiliary subunits control the gating and pharmacology of the AMPAR complex and profoundly impact their biogenesis and protein processing. Interacts with intersectin 1/ITSN1. Interacts with SNARE complex components, including SNAP25, STX1A, SYT1 and SYT2; this interaction may inhibit SNARE complex formation.

It localises to the cell membrane. The protein localises to the presynaptic cell membrane. The protein resides in the synapse. It is found in the cell projection. Its subcellular location is the axon. It localises to the cytoplasmic vesicle. The protein localises to the secretory vesicle. The protein resides in the synaptic vesicle membrane. It is found in the postsynaptic density membrane. Its subcellular location is the dendritic spine. In terms of biological role, as a component of the outer core of AMPAR complex, may be involved in synaptic transmission in the central nervous system. In hippocampal neurons, in presynaptic terminals, plays an important role in the final steps of neurotransmitter release, possibly by regulating Ca(2+)-sensing. In the cerebellum, may inhibit SNARE complex formation and down-regulate short-term facilitation. In Pongo abelii (Sumatran orangutan), this protein is Proline-rich transmembrane protein 2 (PRRT2).